Reading from the N-terminus, the 575-residue chain is MNTKLLYRLARNLRFYKKDLIIVIISLLSVSLALLLIGNVFRNLVDQGLVLDRTAAVDKSILYICLLIIILSIASFFRSYFINNVAEKVSSQIRKEAYSNLINYEITEFEELKIGDIISRLTSDIDQISKLIVNFLSFFIRNSVMLVGSIILMFFESFKLASIVIITIPLLLIPIIKFGKHVKALSKKTLESQSLLASDINESFSNIKTIHAFGGQAAKITEFNNLLQDYLTYSAARLKIRALFFAFSMAFIFLGVTLVIWIGALDIVKGNLSSGQIISFIYYAIIAGFSSGGIFELLSEMHLPLAALERIVTIIDKSPIVHNNYSDLKPVNSISLEFKNVNFSYPSRPNLKILNNISFKIDSTQFIGIVGRSGSGKSTLMQLLLRFYVQESGIILVNNQDIALLNPNEIRKLIAYVPQEASIFSGTIKSNIMFGNDSSEEEITEIIKITGIADFTDKIPDGINAKIGEKGVRLSGGQKQRIALARALLRKPQILLLDEAMNALDSQSEQKLLSSIRDIMKGKIVISIAHRISSIESADNILIIDKGAVEAEGTHAHLLKTSDLYRTIYKEVDLL.

Residues 20 to 303 (LIIVIISLLS…IFELLSEMHL (284 aa)) form the ABC transmembrane type-1 domain. 6 consecutive transmembrane segments (helical) span residues 21–41 (IIVIISLLSVSLALLLIGNVF), 61–81 (ILYICLLIIILSIASFFRSYF), 135–155 (FLSFFIRNSVMLVGSIILMFF), 158–178 (FKLASIVIITIPLLLIPIIKF), 242–262 (ALFFAFSMAFIFLGVTLVIWI), and 277–297 (IISFIYYAIIAGFSSGGIFEL). The 236-residue stretch at 336–571 (LEFKNVNFSY…SDLYRTIYKE (236 aa)) folds into the ABC transporter domain. ATP is bound at residue 371 to 378 (GRSGSGKS).

It belongs to the ABC transporter superfamily. As to quaternary structure, homodimer.

Its subcellular location is the cell inner membrane. Part of an ABC transporter complex. Transmembrane domains (TMD) form a pore in the inner membrane and the ATP-binding domain (NBD) is responsible for energy generation. The sequence is that of Putative export ATP-binding/permease protein RBE_0492 from Rickettsia bellii (strain RML369-C).